The primary structure comprises 53 residues: MTKYVCTVCGYVYDPEVGDPDNNINPGTSFQDIPEDWVCPLCGVGKDQFEEEA.

In terms of domain architecture, Rubredoxin-like spans 1–53 (MTKYVCTVCGYVYDPEVGDPDNNINPGTSFQDIPEDWVCPLCGVGKDQFEEEA). Residues C6, C9, C39, and C42 each contribute to the Fe cation site.

Belongs to the rubredoxin family. The cofactor is Fe(3+).

Functionally, rubredoxin is a small nonheme, iron protein lacking acid-labile sulfide. Its single Fe, chelated to 4 Cys, functions as an electron acceptor and may also stabilize the conformation of the molecule. The protein is Rubredoxin of Acetoanaerobium sticklandii (strain ATCC 12662 / DSM 519 / JCM 1433 / CCUG 9281 / NCIMB 10654 / HF) (Clostridium sticklandii).